Reading from the N-terminus, the 483-residue chain is Regulatory protein ViaA (483 aa).

Belongs to the ViaA family. In terms of assembly, homodimer. Interacts with RavA.

It localises to the cytoplasm. Its function is as follows. Component of the RavA-ViaA chaperone complex, which may act on the membrane to optimize the function of some of the respiratory chains. ViaA stimulates the ATPase activity of RavA. This Salmonella agona (strain SL483) protein is Regulatory protein ViaA.